We begin with the raw amino-acid sequence, 82 residues long: UPF0153 protein VC_1057 (82 aa).

The protein belongs to the UPF0153 family.

The protein is UPF0153 protein VC_1057 of Vibrio cholerae serotype O1 (strain ATCC 39315 / El Tor Inaba N16961).